Reading from the N-terminus, the 39-residue chain is Large ribosomal subunit protein bL36 (39 aa).

The protein belongs to the bacterial ribosomal protein bL36 family.

In Pediococcus pentosaceus (strain ATCC 25745 / CCUG 21536 / LMG 10740 / 183-1w), this protein is Large ribosomal subunit protein bL36.